We begin with the raw amino-acid sequence, 257 residues long: MKAHKIFWLNLAAIIIISIVVSGDMFLAMKWEQIHLKDGLKKVLSTYPIKNLETLYEIDGHDNPHYENNDQDTWYIESSYSVVGSDELLKEDRMLLKVDKNTHKITGEYDTTTNDKKNATDSTYKSYPVKVVNNKIVFTKDVKDPALKQKIENNQFLIQSGDLTSILNSNDLKVTHDPTTDYYNLSGKLSNDNPNVKQLKRRYNIPKNASTKVELKGMSDLKGNNHQDQKLYFYFSSPGKDQIIYKESLTYNKISEH.

The helical transmembrane segment at isoleucine 6–phenylalanine 26 threads the bilayer.

It belongs to the staphylococcal tandem lipoprotein family.

It localises to the cell membrane. This is an uncharacterized protein from Staphylococcus aureus (strain COL).